A 338-amino-acid polypeptide reads, in one-letter code: Ketol-acid reductoisomerase (NADP(+)) (338 aa).

The region spanning 1–181 (MRVFYDKDCD…GGGRTGIIET (181 aa)) is the KARI N-terminal Rossmann domain. Residues 24–27 (YGSQ), Arg-47, Ser-50, Thr-52, and 82–85 (DEFQ) contribute to the NADP(+) site. Residue His-107 is part of the active site. Gly-133 is a binding site for NADP(+). Positions 182 to 327 (TFKDETETDL…EKLRAMMPWI (146 aa)) constitute a KARI C-terminal knotted domain. 4 residues coordinate Mg(2+): Asp-190, Glu-194, Glu-226, and Glu-230. Ser-251 lines the substrate pocket.

Belongs to the ketol-acid reductoisomerase family. Requires Mg(2+) as cofactor.

The catalysed reaction is (2R)-2,3-dihydroxy-3-methylbutanoate + NADP(+) = (2S)-2-acetolactate + NADPH + H(+). The enzyme catalyses (2R,3R)-2,3-dihydroxy-3-methylpentanoate + NADP(+) = (S)-2-ethyl-2-hydroxy-3-oxobutanoate + NADPH + H(+). The protein operates within amino-acid biosynthesis; L-isoleucine biosynthesis; L-isoleucine from 2-oxobutanoate: step 2/4. It participates in amino-acid biosynthesis; L-valine biosynthesis; L-valine from pyruvate: step 2/4. Its function is as follows. Involved in the biosynthesis of branched-chain amino acids (BCAA). Catalyzes an alkyl-migration followed by a ketol-acid reduction of (S)-2-acetolactate (S2AL) to yield (R)-2,3-dihydroxy-isovalerate. In the isomerase reaction, S2AL is rearranged via a Mg-dependent methyl migration to produce 3-hydroxy-3-methyl-2-ketobutyrate (HMKB). In the reductase reaction, this 2-ketoacid undergoes a metal-dependent reduction by NADPH to yield (R)-2,3-dihydroxy-isovalerate. The polypeptide is Ketol-acid reductoisomerase (NADP(+)) (Pseudomonas paraeruginosa (strain DSM 24068 / PA7) (Pseudomonas aeruginosa (strain PA7))).